The sequence spans 468 residues: Tyrosine-protein phosphatase YopH (468 aa).

Residues 127 to 194 (ARGHVSSHSH…TVSPYGPEAR (68 aa)) are disordered. The segment covering 130 to 141 (HVSSHSHSALHA) has biased composition (low complexity). The Tyrosine-protein phosphatase domain occupies 152–461 (SHLDPRTPPL…DVLIKLAEGQ (310 aa)). Cys403 acts as the Phosphocysteine intermediate in catalysis.

It belongs to the protein-tyrosine phosphatase family. Non-receptor class subfamily.

It localises to the secreted. The catalysed reaction is O-phospho-L-tyrosyl-[protein] + H2O = L-tyrosyl-[protein] + phosphate. Functionally, essential virulence determinant. This protein is a protein tyrosine phosphatase. The essential function of YopH in Yersinia pathogenesis is host-protein dephosphorylation. It contributes to the ability of the bacteria to resist phagocytosis by peritoneal macrophages. This is Tyrosine-protein phosphatase YopH (yopH) from Yersinia pseudotuberculosis serotype I (strain IP32953).